A 352-amino-acid polypeptide reads, in one-letter code: Histidinol-phosphate aminotransferase (352 aa).

K211 carries the post-translational modification N6-(pyridoxal phosphate)lysine.

Belongs to the class-II pyridoxal-phosphate-dependent aminotransferase family. Histidinol-phosphate aminotransferase subfamily. In terms of assembly, homodimer. Requires pyridoxal 5'-phosphate as cofactor.

The catalysed reaction is L-histidinol phosphate + 2-oxoglutarate = 3-(imidazol-4-yl)-2-oxopropyl phosphate + L-glutamate. It participates in amino-acid biosynthesis; L-histidine biosynthesis; L-histidine from 5-phospho-alpha-D-ribose 1-diphosphate: step 7/9. This Haemophilus influenzae (strain PittGG) protein is Histidinol-phosphate aminotransferase.